We begin with the raw amino-acid sequence, 81 residues long: Small ribosomal subunit protein bS18 (81 aa).

It belongs to the bacterial ribosomal protein bS18 family. Part of the 30S ribosomal subunit. Forms a tight heterodimer with protein bS6.

Binds as a heterodimer with protein bS6 to the central domain of the 16S rRNA, where it helps stabilize the platform of the 30S subunit. The sequence is that of Small ribosomal subunit protein bS18 from Chloroflexus aurantiacus (strain ATCC 29366 / DSM 635 / J-10-fl).